Consider the following 180-residue polypeptide: Protein GrpE (180 aa).

Residues 1–21 (MSEEVKEQNLPEVEPVQEAAS) form a disordered region.

The protein belongs to the GrpE family. In terms of assembly, homodimer.

The protein resides in the cytoplasm. Its function is as follows. Participates actively in the response to hyperosmotic and heat shock by preventing the aggregation of stress-denatured proteins, in association with DnaK and GrpE. It is the nucleotide exchange factor for DnaK and may function as a thermosensor. Unfolded proteins bind initially to DnaJ; upon interaction with the DnaJ-bound protein, DnaK hydrolyzes its bound ATP, resulting in the formation of a stable complex. GrpE releases ADP from DnaK; ATP binding to DnaK triggers the release of the substrate protein, thus completing the reaction cycle. Several rounds of ATP-dependent interactions between DnaJ, DnaK and GrpE are required for fully efficient folding. This Campylobacter concisus (strain 13826) protein is Protein GrpE.